Consider the following 98-residue polypeptide: NADH-ubiquinone oxidoreductase chain 4L (98 aa).

3 helical membrane passes run 1–21 (MSPIFMNITLAFTISLLGMLV), 26–46 (LMASLLCLEGMMMSLFIMIAL), and 61–81 (IILLVFAACETAVGLALLVSI).

Belongs to the complex I subunit 4L family. In terms of assembly, core subunit of respiratory chain NADH dehydrogenase (Complex I) which is composed of 45 different subunits.

The protein localises to the mitochondrion inner membrane. The catalysed reaction is a ubiquinone + NADH + 5 H(+)(in) = a ubiquinol + NAD(+) + 4 H(+)(out). In terms of biological role, core subunit of the mitochondrial membrane respiratory chain NADH dehydrogenase (Complex I) which catalyzes electron transfer from NADH through the respiratory chain, using ubiquinone as an electron acceptor. Part of the enzyme membrane arm which is embedded in the lipid bilayer and involved in proton translocation. The sequence is that of NADH-ubiquinone oxidoreductase chain 4L (MT-ND4L) from Chlorocebus sabaeus (Green monkey).